The following is a 648-amino-acid chain: Actin-related protein 5 (648 aa).

The tract at residues 34 to 59 (LTKPRKDRKKEAAASEGSASQTTVEQ) is disordered. 2 coiled-coil regions span residues 277–311 (TAEQ…EQQL) and 340–364 (TLED…RAQS). Disordered stretches follow at residues 357 to 385 (RAQE…PEGM) and 403 to 455 (GRKQ…GMND). Over residues 414–428 (EQAKRHTHAAQERMR) the composition is skewed to basic and acidic residues. 2 positions are modified to phosphoserine: S471 and S473.

The protein belongs to the actin family. ARP5 subfamily. As to quaternary structure, component of the chromatin remodeling Ino80 complex.

It is found in the nucleus. In terms of biological role, proposed core component of the chromatin remodeling Ino80 complex which is involved in transcriptional regulation, DNA replication and probably DNA repair. The polypeptide is Actin-related protein 5 (Drosophila melanogaster (Fruit fly)).